The primary structure comprises 508 residues: Aromatic-L-amino-acid decarboxylase (508 aa).

Thr82 is a binding site for substrate. Pyridoxal 5'-phosphate is bound by residues Ala148 and Ser149. A substrate-binding site is contributed by His192. Pyridoxal 5'-phosphate-binding residues include Thr246 and Asn300. The residue at position 303 (Lys303) is an N6-(pyridoxal phosphate)lysine.

The protein belongs to the group II decarboxylase family. Homodimer. The cofactor is pyridoxal 5'-phosphate.

It catalyses the reaction L-dopa + H(+) = dopamine + CO2. The enzyme catalyses 5-hydroxy-L-tryptophan + H(+) = serotonin + CO2. Catalyzes the decarboxylation of L-3,4-dihydroxyphenylalanine (DOPA) to dopamine, L-5-hydroxytryptophan to serotonin and L-tryptophan to tryptamine. This is Aromatic-L-amino-acid decarboxylase (Ddc) from Manduca sexta (Tobacco hawkmoth).